The sequence spans 52 residues: Conotoxin Cal9.2c (52 aa).

The propeptide occupies 1–6 (KKGVTL). Disulfide bonds link Cys-14–Cys-31, Cys-19–Cys-41, and Cys-21–Cys-46.

In terms of tissue distribution, expressed by the venom duct.

The protein localises to the secreted. In terms of biological role, probable neurotoxin with unknown target. Possibly targets ion channels. The polypeptide is Conotoxin Cal9.2c (Californiconus californicus (California cone)).